Consider the following 311-residue polypeptide: Ribonuclease HIII (311 aa).

Residues 95–311 (MSIVGSDEVG…NTEKAFRLLK (217 aa)) form the RNase H type-2 domain. A divalent metal cation-binding residues include D101, E102, and D206.

Belongs to the RNase HII family. RnhC subfamily. Mn(2+) serves as cofactor. It depends on Mg(2+) as a cofactor.

Its subcellular location is the cytoplasm. The enzyme catalyses Endonucleolytic cleavage to 5'-phosphomonoester.. Its function is as follows. Endonuclease that specifically degrades the RNA of RNA-DNA hybrids. This chain is Ribonuclease HIII, found in Bacillus cereus (strain 03BB102).